A 218-amino-acid chain; its full sequence is uncharacterized protein (218 aa).

Positions 1–67 (MARITNMGKR…KKKRSEYRRL (67 aa)) are disordered. A compositionally biased stretch (low complexity) spans 29–39 (NSSNTNEESSS). Polar residues predominate over residues 40–49 (QDNMKASFGS). Over residues 58–67 (KKKRSEYRRL) the composition is skewed to basic residues. CCHC-type zinc fingers lie at residues 77 to 94 (KFCF…DCPE), 100 to 117 (SICF…ACSK), and 124 to 141 (AKCF…QCEQ). The CCHC-type 4; atypical zinc finger occupies 152 to 168 (CCKFCSSVHHLAKDCDQ).

This is an uncharacterized protein from Schizosaccharomyces pombe (strain 972 / ATCC 24843) (Fission yeast).